Consider the following 49-residue polypeptide: Large ribosomal subunit protein bL34 (49 aa).

Belongs to the bacterial ribosomal protein bL34 family.

The sequence is that of Large ribosomal subunit protein bL34 from Sorangium cellulosum (strain So ce56) (Polyangium cellulosum (strain So ce56)).